A 476-amino-acid polypeptide reads, in one-letter code: Aspartyl/glutamyl-tRNA(Asn/Gln) amidotransferase subunit B (476 aa).

The protein belongs to the GatB/GatE family. GatB subfamily. In terms of assembly, heterotrimer of A, B and C subunits.

The enzyme catalyses L-glutamyl-tRNA(Gln) + L-glutamine + ATP + H2O = L-glutaminyl-tRNA(Gln) + L-glutamate + ADP + phosphate + H(+). It carries out the reaction L-aspartyl-tRNA(Asn) + L-glutamine + ATP + H2O = L-asparaginyl-tRNA(Asn) + L-glutamate + ADP + phosphate + 2 H(+). Its function is as follows. Allows the formation of correctly charged Asn-tRNA(Asn) or Gln-tRNA(Gln) through the transamidation of misacylated Asp-tRNA(Asn) or Glu-tRNA(Gln) in organisms which lack either or both of asparaginyl-tRNA or glutaminyl-tRNA synthetases. The reaction takes place in the presence of glutamine and ATP through an activated phospho-Asp-tRNA(Asn) or phospho-Glu-tRNA(Gln). The chain is Aspartyl/glutamyl-tRNA(Asn/Gln) amidotransferase subunit B from Neisseria meningitidis serogroup A / serotype 4A (strain DSM 15465 / Z2491).